The sequence spans 297 residues: tRNA uridine(34) hydroxylase (297 aa).

Residues 133–228 enclose the Rhodanese domain; sequence RGEEVVFFDG…YGETFKDQGL (96 aa). Residue C188 is the Cysteine persulfide intermediate of the active site.

It belongs to the TrhO family.

The catalysed reaction is uridine(34) in tRNA + AH2 + O2 = 5-hydroxyuridine(34) in tRNA + A + H2O. Its function is as follows. Catalyzes oxygen-dependent 5-hydroxyuridine (ho5U) modification at position 34 in tRNAs. The sequence is that of tRNA uridine(34) hydroxylase from Arthrobacter sp. (strain FB24).